Here is a 274-residue protein sequence, read N- to C-terminus: N-acetylmuramic acid 6-phosphate etherase (274 aa).

The SIS domain occupies isoleucine 52–arginine 215. The active-site Proton donor is the glutamate 80. The active site involves glutamate 111.

It belongs to the GCKR-like family. MurNAc-6-P etherase subfamily. Homodimer.

It catalyses the reaction N-acetyl-D-muramate 6-phosphate + H2O = N-acetyl-D-glucosamine 6-phosphate + (R)-lactate. Its pathway is amino-sugar metabolism; N-acetylmuramate degradation. Specifically catalyzes the cleavage of the D-lactyl ether substituent of MurNAc 6-phosphate, producing GlcNAc 6-phosphate and D-lactate. The sequence is that of N-acetylmuramic acid 6-phosphate etherase from Porphyromonas gingivalis (strain ATCC 33277 / DSM 20709 / CIP 103683 / JCM 12257 / NCTC 11834 / 2561).